The following is a 1890-amino-acid chain: Putative aminopeptidase-2 (1890 aa).

Positions Met-1 to Thr-20 are cleaved as a signal peptide. The N-linked (GlcNAc...) asparagine glycan is linked to Asn-110. Substrate-binding positions include Glu-220 and Gly-354–Asn-358. A Zn(2+)-binding site is contributed by His-390. The active-site Proton acceptor is Glu-391. His-394 and Glu-413 together coordinate Zn(2+). N-linked (GlcNAc...) asparagine glycans are attached at residues Asn-534, Asn-581, Asn-785, Asn-803, Asn-914, Asn-1024, and Asn-1094. Glu-1143 provides a ligand contact to substrate. Asn-1245 carries N-linked (GlcNAc...) asparagine glycosylation. Gly-1280–Asn-1284 contributes to the substrate binding site. His-1316 is a Zn(2+) binding site. Residue Glu-1317 is the Proton acceptor of the active site. Zn(2+) is bound by residues His-1320 and Glu-1339. N-linked (GlcNAc...) asparagine glycans are attached at residues Asn-1451, Asn-1521, Asn-1826, and Asn-1841.

This sequence belongs to the peptidase M1 family. Requires Zn(2+) as cofactor.

Its function is as follows. Putative aminopeptidase which plays a role in oocyte maturation. This Caenorhabditis elegans protein is Putative aminopeptidase-2.